Here is a 953-residue protein sequence, read N- to C-terminus: Mannosylglycoprotein endo-beta-mannosidase (953 aa).

Residue Glu-461 is the Proton donor of the active site. Residue Glu-553 is the Nucleophile of the active site.

It belongs to the glycosyl hydrolase 2 family. As to quaternary structure, heterotrimer of 31 kDa, 28 kDa and 42 kDa subunits. The mature enzyme is proteotically cleaved into 3 subunits of 31 kDa, 28 kDa and 42 kDa. Ubiquitously expressed.

It catalyses the reaction Hydrolysis of the alpha-D-mannosyl-(1-&gt;6)-beta-D-mannosyl-(1-&gt;4)-N-acetyl-beta-D-glucosaminyl-(1-&gt;4)-N-acetyl-beta-D-glucosaminyl sequence of glycoprotein to alpha-D-mannosyl-(1-&gt;6)-D-mannose and N-acetyl-beta-D-glucosaminyl-(1-&gt;4)-N-acetyl-beta-D-glucosaminyl sequences.. In terms of biological role, glycosidase that specifically hydrolyzes the Man-beta-1,4-GlcNAc linkage in the trimannosyl core structure of N-glycans. Does not hydrolyzes pyridylamino derivatives sugar chains containing Man-alpha-1,3-Man-beta or Xylose-beta-1,2-Man-beta. The chain is Mannosylglycoprotein endo-beta-mannosidase (EBM) from Lilium longiflorum (Trumpet lily).